A 132-amino-acid polypeptide reads, in one-letter code: D-ribose pyranase (132 aa).

The active-site Proton donor is the His20. Substrate contacts are provided by residues Asp28, His98, and 120–122 (YAN).

Belongs to the RbsD / FucU family. RbsD subfamily. As to quaternary structure, homodecamer.

It is found in the cytoplasm. The catalysed reaction is beta-D-ribopyranose = beta-D-ribofuranose. It functions in the pathway carbohydrate metabolism; D-ribose degradation; D-ribose 5-phosphate from beta-D-ribopyranose: step 1/2. Functionally, catalyzes the interconversion of beta-pyran and beta-furan forms of D-ribose. This chain is D-ribose pyranase, found in Geobacillus thermodenitrificans (strain NG80-2).